Consider the following 464-residue polypeptide: Cysteine--tRNA ligase (464 aa).

Cys27 provides a ligand contact to Zn(2+). The 'HIGH' region signature appears at 29–39 (PTVYNYFHIGN). 3 residues coordinate Zn(2+): Cys207, His232, and Glu236. The short motif at 264 to 268 (KMSKS) is the 'KMSKS' region element. ATP is bound at residue Lys267.

Belongs to the class-I aminoacyl-tRNA synthetase family. In terms of assembly, monomer. The cofactor is Zn(2+).

It localises to the cytoplasm. It carries out the reaction tRNA(Cys) + L-cysteine + ATP = L-cysteinyl-tRNA(Cys) + AMP + diphosphate. In Alkaliphilus oremlandii (strain OhILAs) (Clostridium oremlandii (strain OhILAs)), this protein is Cysteine--tRNA ligase.